Reading from the N-terminus, the 92-residue chain is Small ribosomal subunit protein uS19c (92 aa).

This sequence belongs to the universal ribosomal protein uS19 family.

It localises to the plastid. It is found in the chloroplast. In terms of biological role, protein S19 forms a complex with S13 that binds strongly to the 16S ribosomal RNA. This chain is Small ribosomal subunit protein uS19c, found in Phalaenopsis aphrodite subsp. formosana (Moth orchid).